An 88-amino-acid polypeptide reads, in one-letter code: Large ribosomal subunit protein bL31B (88 aa).

Belongs to the bacterial ribosomal protein bL31 family. Type B subfamily. Part of the 50S ribosomal subunit.

In Paraburkholderia xenovorans (strain LB400), this protein is Large ribosomal subunit protein bL31B.